The primary structure comprises 984 residues: Putative formate dehydrogenase SAUSA300_2258 (984 aa).

Positions 3–79 (EHLVVTLDGK…PMTVNTVNND (77 aa)) constitute a 2Fe-2S ferredoxin-type domain. Cys-37, Cys-48, Cys-51, and Cys-63 together coordinate [2Fe-2S] cluster. A 4Fe-4S His(Cys)3-ligated-type domain is found at 79-119 (DVKDAQKEALDRILEKHMLYCTVCDYNNGDCEIHNTMDAWG). Positions 95, 99, 102, 109, 147, 150, 153, 157, 190, 193, 196, 200, 264, 267, 271, and 299 each coordinate [4Fe-4S] cluster. 2 consecutive 4Fe-4S ferredoxin-type domains span residues 138 to 165 (PFYR…VNET) and 181 to 211 (NDVP…VNME). The segment at 252-984 (MRKERIKKTK…YVFPGNQVDK (733 aa)) is formate dehydrogenase. One can recognise a 4Fe-4S Mo/W bis-MGD-type domain in the interval 257-313 (IKKTKTVCTYCGVGCSFEVWTKDREILKVQPSHDSPANKIATCVKGKFSWGHINSDQ).

In the C-terminal section; belongs to the prokaryotic molybdopterin-containing oxidoreductase family. The cofactor is [2Fe-2S] cluster. Requires [4Fe-4S] cluster as cofactor. Mo-bis(molybdopterin guanine dinucleotide) serves as cofactor.

The catalysed reaction is formate + NAD(+) = CO2 + NADH. This is Putative formate dehydrogenase SAUSA300_2258 from Staphylococcus aureus (strain USA300).